We begin with the raw amino-acid sequence, 107 residues long: CLAVATA3/ESR (CLE)-related protein 13 (107 aa).

An N-terminal signal peptide occupies residues M1–G25. N29 carries an N-linked (GlcNAc...) asparagine glycan. Positions A79–H107 are disordered. Residues I87 to L97 are compositionally biased toward basic and acidic residues. Hydroxyproline occurs at positions 99 and 102. O-linked (Ara...) hydroxyproline glycosylation occurs at P102.

This sequence belongs to the CLV3/ESR signal peptide family. Post-translationally, the O-glycosylation (arabinosylation) of the hydroxyproline Pro-102 enhances binding affinity of the CLE13p peptide for its receptor. In terms of tissue distribution, mostly expressed in seedlings, roots, flowers, stems and apex, and, to a lower extent, in leaves and siliques.

It localises to the secreted. The protein localises to the extracellular space. Its function is as follows. Extracellular signal peptide that regulates cell fate. Represses root apical meristem maintenance. Regulates the transition of protophloem cells from proliferation to differentiation, thus impinging on postembryonic growth capacity of the root meristem; this signaling pathway requires CRN and CLV2. The polypeptide is CLAVATA3/ESR (CLE)-related protein 13 (Arabidopsis thaliana (Mouse-ear cress)).